Reading from the N-terminus, the 241-residue chain is Pyridoxine/pyridoxamine 5'-phosphate oxidase (241 aa).

The tract at residues 1-35 is disordered; it reads MASNPPSAASPRRTAVSPGADRPDGPDPAGQRQSY. Substrate contacts are provided by residues 32 to 35 and lysine 92; that span reads RQSY. FMN is bound by residues 87-92, 102-103, arginine 108, lysine 109, and glutamine 131; these read RTVLLK and YT. Substrate contacts are provided by tyrosine 149, arginine 153, and serine 157. Residues 166–167 and tryptophan 212 contribute to the FMN site; that span reads QS. 218–220 contacts substrate; it reads RLH. Residue arginine 222 coordinates FMN.

Belongs to the pyridoxamine 5'-phosphate oxidase family. As to quaternary structure, homodimer. Requires FMN as cofactor.

It carries out the reaction pyridoxamine 5'-phosphate + O2 + H2O = pyridoxal 5'-phosphate + H2O2 + NH4(+). The catalysed reaction is pyridoxine 5'-phosphate + O2 = pyridoxal 5'-phosphate + H2O2. The protein operates within cofactor metabolism; pyridoxal 5'-phosphate salvage; pyridoxal 5'-phosphate from pyridoxamine 5'-phosphate: step 1/1. Its pathway is cofactor metabolism; pyridoxal 5'-phosphate salvage; pyridoxal 5'-phosphate from pyridoxine 5'-phosphate: step 1/1. Functionally, catalyzes the oxidation of either pyridoxine 5'-phosphate (PNP) or pyridoxamine 5'-phosphate (PMP) into pyridoxal 5'-phosphate (PLP). This chain is Pyridoxine/pyridoxamine 5'-phosphate oxidase, found in Frankia alni (strain DSM 45986 / CECT 9034 / ACN14a).